The primary structure comprises 610 residues: Estrogen receptor beta-2 (610 aa).

Residues Met-1–Phe-170 form a modulating region. NR C4-type zinc fingers lie at residues Cys-171–Cys-191 and Cys-207–Cys-231. Residues Cys-171 to Met-236 constitute a DNA-binding region (nuclear receptor). The region spanning Ser-302–Asn-538 is the NR LBD domain. Residues His-566–His-596 form a disordered region. The segment covering Ser-577–His-596 has biased composition (basic and acidic residues).

It belongs to the nuclear hormone receptor family. NR3 subfamily. In terms of assembly, binds DNA as a homodimer. Can form a heterodimer with ER-alpha. As to expression, predominantly expressed in pituitary, telencephalon and hypothalamus as well as in the liver.

The protein localises to the nucleus. Functionally, binds estrogens with an affinity similar to that of ER-alpha, and activates expression of reporter genes containing estrogen response elements (ERE) in an estrogen-dependent manner. The protein is Estrogen receptor beta-2 (esr2b) of Carassius auratus (Goldfish).